We begin with the raw amino-acid sequence, 350 residues long: Probable dual-specificity RNA methyltransferase RlmN (350 aa).

The region spanning 105-342 (ANGKNSVCIS…VRQSKGANIN (238 aa)) is the Radical SAM core domain. Cys-112 and Cys-345 are disulfide-bonded. 3 residues coordinate [4Fe-4S] cluster: Cys-119, Cys-123, and Cys-126. S-adenosyl-L-methionine-binding positions include 166–167 (GE), Ser-198, 221–223 (SLH), and Asn-302. Cys-345 serves as the catalytic S-methylcysteine intermediate.

This sequence belongs to the radical SAM superfamily. RlmN family. Requires [4Fe-4S] cluster as cofactor.

The protein resides in the cytoplasm. The catalysed reaction is adenosine(2503) in 23S rRNA + 2 reduced [2Fe-2S]-[ferredoxin] + 2 S-adenosyl-L-methionine = 2-methyladenosine(2503) in 23S rRNA + 5'-deoxyadenosine + L-methionine + 2 oxidized [2Fe-2S]-[ferredoxin] + S-adenosyl-L-homocysteine. It catalyses the reaction adenosine(37) in tRNA + 2 reduced [2Fe-2S]-[ferredoxin] + 2 S-adenosyl-L-methionine = 2-methyladenosine(37) in tRNA + 5'-deoxyadenosine + L-methionine + 2 oxidized [2Fe-2S]-[ferredoxin] + S-adenosyl-L-homocysteine. Specifically methylates position 2 of adenine 2503 in 23S rRNA and position 2 of adenine 37 in tRNAs. This Endomicrobium trichonymphae protein is Probable dual-specificity RNA methyltransferase RlmN.